Consider the following 324-residue polypeptide: Lipoyl synthase (324 aa).

Residues Cys-71, Cys-76, Cys-82, Cys-97, Cys-101, Cys-104, and Ser-311 each contribute to the [4Fe-4S] cluster site. Residues Phe-83–Thr-300 form the Radical SAM core domain.

This sequence belongs to the radical SAM superfamily. Lipoyl synthase family. The cofactor is [4Fe-4S] cluster.

Its subcellular location is the cytoplasm. The catalysed reaction is [[Fe-S] cluster scaffold protein carrying a second [4Fe-4S](2+) cluster] + N(6)-octanoyl-L-lysyl-[protein] + 2 oxidized [2Fe-2S]-[ferredoxin] + 2 S-adenosyl-L-methionine + 4 H(+) = [[Fe-S] cluster scaffold protein] + N(6)-[(R)-dihydrolipoyl]-L-lysyl-[protein] + 4 Fe(3+) + 2 hydrogen sulfide + 2 5'-deoxyadenosine + 2 L-methionine + 2 reduced [2Fe-2S]-[ferredoxin]. Its pathway is protein modification; protein lipoylation via endogenous pathway; protein N(6)-(lipoyl)lysine from octanoyl-[acyl-carrier-protein]: step 2/2. Functionally, catalyzes the radical-mediated insertion of two sulfur atoms into the C-6 and C-8 positions of the octanoyl moiety bound to the lipoyl domains of lipoate-dependent enzymes, thereby converting the octanoylated domains into lipoylated derivatives. The sequence is that of Lipoyl synthase from Nitrosococcus oceani (strain ATCC 19707 / BCRC 17464 / JCM 30415 / NCIMB 11848 / C-107).